We begin with the raw amino-acid sequence, 47 residues long: Putative protein PinH (47 aa).

In terms of domain architecture, Resolvase/invertase-type recombinase catalytic spans 1–47 (MWHLVVLLEELCERGINFRALAQSIFAQQWGDECCKSKTICDLKVIV).

Belongs to the site-specific recombinase resolvase family.

The sequence is that of Putative protein PinH (pinH) from Escherichia coli (strain K12).